A 274-amino-acid chain; its full sequence is NH(3)-dependent NAD(+) synthetase (274 aa).

ATP is bound at residue 46-53 (GISGGQDS). Aspartate 52 is a binding site for Mg(2+). Arginine 140 contacts deamido-NAD(+). ATP is bound at residue threonine 160. Residue glutamate 165 coordinates Mg(2+). Deamido-NAD(+)-binding residues include lysine 173 and aspartate 180. Positions 189 and 211 each coordinate ATP. Deamido-NAD(+) is bound at residue 260–261 (HK).

This sequence belongs to the NAD synthetase family. Homodimer.

It catalyses the reaction deamido-NAD(+) + NH4(+) + ATP = AMP + diphosphate + NAD(+) + H(+). It participates in cofactor biosynthesis; NAD(+) biosynthesis; NAD(+) from deamido-NAD(+) (ammonia route): step 1/1. Its function is as follows. Catalyzes the ATP-dependent amidation of deamido-NAD to form NAD. Uses ammonia as a nitrogen source. The sequence is that of NH(3)-dependent NAD(+) synthetase from Streptococcus equi subsp. equi (strain 4047).